The chain runs to 196 residues: Probable malonic semialdehyde reductase RutE (196 aa).

It belongs to the nitroreductase family. HadB/RutE subfamily. The cofactor is FMN.

The catalysed reaction is 3-hydroxypropanoate + NADP(+) = 3-oxopropanoate + NADPH + H(+). May reduce toxic product malonic semialdehyde to 3-hydroxypropionic acid, which is excreted. The polypeptide is Probable malonic semialdehyde reductase RutE (Klebsiella pneumoniae (strain 342)).